The primary structure comprises 117 residues: MRHKHGYRKLGRTSSHRAALLKNLTIALVNSGKIETTLPKAKELRGYVERLITRARLGDFNAHRAVFASLQDKNATNKLVTEIAPKFKDRNGGYTRIIKTRIRRGDAAEMAFIEFVA.

It belongs to the bacterial ribosomal protein bL17 family. In terms of assembly, part of the 50S ribosomal subunit. Contacts protein L32.

The sequence is that of Large ribosomal subunit protein bL17 from Campylobacter jejuni subsp. jejuni serotype O:6 (strain 81116 / NCTC 11828).